We begin with the raw amino-acid sequence, 184 residues long: Protein DMP2 (184 aa).

The next 4 helical transmembrane spans lie at 19–39, 45–65, 105–125, and 142–162; these read LIKL…PVLT, LLIN…SCCF, VGDF…SLLD, and IFLM…FTVF.

Belongs to the plant DMP1 protein family. In terms of tissue distribution, expressed constitutively in leaves, stems, flowers, siliques and roots.

It is found in the endoplasmic reticulum membrane. The protein localises to the vacuole membrane. Functionally, involved in membrane remodeling. The polypeptide is Protein DMP2 (Arabidopsis thaliana (Mouse-ear cress)).